A 236-amino-acid polypeptide reads, in one-letter code: Factor V activator RVV-V alpha (236 aa).

Residues 1 to 227 (VVGGDECNIN…YNNWIQNIIA (227 aa)) form the Peptidase S1 domain. 6 disulfides stabilise this stretch: Cys7-Cys141, Cys28-Cys44, Cys76-Cys234, Cys120-Cys188, Cys152-Cys167, and Cys178-Cys203. Residues His43 and Asp88 each act as charge relay system in the active site. Ser182 serves as the catalytic Charge relay system. N-linked (GlcNAc...) asparagine glycosylation occurs at Asn229.

This sequence belongs to the peptidase S1 family. Snake venom subfamily. In terms of assembly, monomer. In terms of tissue distribution, expressed by the venom gland.

The protein localises to the secreted. The catalysed reaction is Fully activates human clotting factor V by a single cleavage at the 1545-Trp-Tyr-Leu-Arg-|-Ser-Asn-Asn-Gly-1552 bond. Cattle, but not rabbit, factor V is cleaved, and no other proteins of the clotting system are attacked. Esterase activity is observed on Bz-Arg-OEt and Tos-Arg-OMe, and amidase activity on Phe-pipecolyl-Arg-NHPhNO2.. Inhibited by D-Phe-Pro-Arg-chloromethyl ketone (FPRCK) (97%), PMSF (76%), and benzamidine (50%). Is not inhibited by BPTI, antithrombin and EDTA. Functionally, venom serine protease that activates factor V (F5) in a calcium-independent manner. It cleaves the Arg(1545)-Ser(1546) linkage in the human factor V molecule. Induces the coagulation of mammalian plasma. The sequence is that of Factor V activator RVV-V alpha from Daboia siamensis (Eastern Russel's viper).